A 469-amino-acid polypeptide reads, in one-letter code: 3-isopropylmalate dehydratase large subunit (469 aa).

Residues Cys347, Cys410, and Cys413 each contribute to the [4Fe-4S] cluster site.

This sequence belongs to the aconitase/IPM isomerase family. LeuC type 1 subfamily. Heterodimer of LeuC and LeuD. The cofactor is [4Fe-4S] cluster.

It carries out the reaction (2R,3S)-3-isopropylmalate = (2S)-2-isopropylmalate. The protein operates within amino-acid biosynthesis; L-leucine biosynthesis; L-leucine from 3-methyl-2-oxobutanoate: step 2/4. In terms of biological role, catalyzes the isomerization between 2-isopropylmalate and 3-isopropylmalate, via the formation of 2-isopropylmaleate. The chain is 3-isopropylmalate dehydratase large subunit from Ralstonia nicotianae (strain ATCC BAA-1114 / GMI1000) (Ralstonia solanacearum).